The chain runs to 308 residues: Ribosomal RNA small subunit methyltransferase H (308 aa).

S-adenosyl-L-methionine contacts are provided by residues 32–34 (GGH), Asp52, Phe78, Asp100, and Gln107.

Belongs to the methyltransferase superfamily. RsmH family.

It is found in the cytoplasm. It catalyses the reaction cytidine(1402) in 16S rRNA + S-adenosyl-L-methionine = N(4)-methylcytidine(1402) in 16S rRNA + S-adenosyl-L-homocysteine + H(+). Specifically methylates the N4 position of cytidine in position 1402 (C1402) of 16S rRNA. This chain is Ribosomal RNA small subunit methyltransferase H, found in Legionella pneumophila (strain Corby).